A 1324-amino-acid polypeptide reads, in one-letter code: RNA2 polyprotein (1324 aa).

This sequence belongs to the nepoviruses RNA2 polyprotein family. Specific enzymatic cleavages in vivo by the P1 encoded 3C-like protease yield mature proteins. Post-translationally, the N-terminus of the coat protein is blocked.

The protein localises to the host cell junction. It is found in the host plasmodesma. It localises to the host cytoplasm. The protein resides in the host nucleus. Its subcellular location is the virion. Implicated in RNA2 replication. Could also be required for nematode transmission of the virus. In terms of biological role, transports viral genome to neighboring plant cells directly through plasmosdesmata, without any budding. The movement protein allows efficient cell to cell propagation, by bypassing the host cell wall barrier. Acts by forming a tubular structure at the host plasmodesmata, enlarging it enough to allow free passage of virion capsids. This is RNA2 polyprotein from Apium graveolens (Celery).